We begin with the raw amino-acid sequence, 672 residues long: Negative growth regulatory protein NGR1 (672 aa).

Met-1 is subject to N-acetylmethionine. 2 stretches are compositionally biased toward polar residues: residues 1 to 13 and 23 to 32; these read MMSN…QRQE and SSTVETSTEP. Disordered regions lie at residues 1–40 and 77–102; these read MMSN…WMGD and SSTS…NSTD. The residue at position 2 (Met-2) is an N-acetylserine. 3 RRM domains span residues 36–159, 192–271, and 360–432; these read LWMG…YSPT, FSLF…YATP, and TTVF…WGRP. Positions 77 to 96 are enriched in low complexity; it reads SSTSSSNNNTSEENAENQQS. Ser-524 carries the phosphoserine modification. Residues 640 to 672 form a disordered region; sequence LNIAPNSNNSKSSIMNKHPNRNNVPPIHPSLLH. Residues 645–656 are compositionally biased toward low complexity; that stretch reads NSNNSKSSIMNK.

In terms of biological role, may be an RNA-binding protein involved in control of an RNA processing pathway that influences the regulation of cell growth in early log phase. Can bind to RNA and single-stranded DNA but not double-stranded DNA. This Saccharomyces cerevisiae (strain ATCC 204508 / S288c) (Baker's yeast) protein is Negative growth regulatory protein NGR1 (NGR1).